The chain runs to 288 residues: Homoserine kinase (288 aa).

Pro79–Ala89 serves as a coordination point for ATP.

This sequence belongs to the GHMP kinase family. Homoserine kinase subfamily.

Its subcellular location is the cytoplasm. It catalyses the reaction L-homoserine + ATP = O-phospho-L-homoserine + ADP + H(+). It participates in amino-acid biosynthesis; L-threonine biosynthesis; L-threonine from L-aspartate: step 4/5. Catalyzes the ATP-dependent phosphorylation of L-homoserine to L-homoserine phosphate. In Listeria welshimeri serovar 6b (strain ATCC 35897 / DSM 20650 / CCUG 15529 / CIP 8149 / NCTC 11857 / SLCC 5334 / V8), this protein is Homoserine kinase.